The sequence spans 237 residues: Leucyl/phenylalanyl-tRNA--protein transferase (237 aa).

The protein belongs to the L/F-transferase family.

It localises to the cytoplasm. It carries out the reaction N-terminal L-lysyl-[protein] + L-leucyl-tRNA(Leu) = N-terminal L-leucyl-L-lysyl-[protein] + tRNA(Leu) + H(+). The enzyme catalyses N-terminal L-arginyl-[protein] + L-leucyl-tRNA(Leu) = N-terminal L-leucyl-L-arginyl-[protein] + tRNA(Leu) + H(+). The catalysed reaction is L-phenylalanyl-tRNA(Phe) + an N-terminal L-alpha-aminoacyl-[protein] = an N-terminal L-phenylalanyl-L-alpha-aminoacyl-[protein] + tRNA(Phe). Its function is as follows. Functions in the N-end rule pathway of protein degradation where it conjugates Leu, Phe and, less efficiently, Met from aminoacyl-tRNAs to the N-termini of proteins containing an N-terminal arginine or lysine. The protein is Leucyl/phenylalanyl-tRNA--protein transferase of Shewanella baltica (strain OS185).